A 330-amino-acid polypeptide reads, in one-letter code: Probable cell division protein WhiA (330 aa).

The H-T-H motif DNA-binding region spans 275-308 (SLDELGRLSDPPLTKDAIAGRIRRLLAMADRRAE).

This sequence belongs to the WhiA family.

Functionally, involved in cell division and chromosome segregation. In Kocuria rhizophila (strain ATCC 9341 / DSM 348 / NBRC 103217 / DC2201), this protein is Probable cell division protein WhiA.